Here is a 200-residue protein sequence, read N- to C-terminus: Cytochrome c biogenesis ATP-binding export protein CcmA (200 aa).

An ABC transporter domain is found at 2–200; sequence LDVIELDFDY…NKADYEEYHL (199 aa). 34-41 serves as a coordination point for ATP; it reads GSNGAGKT.

It belongs to the ABC transporter superfamily. CcmA exporter (TC 3.A.1.107) family. In terms of assembly, the complex is composed of two ATP-binding proteins (CcmA) and two transmembrane proteins (CcmB).

It localises to the cell inner membrane. The enzyme catalyses heme b(in) + ATP + H2O = heme b(out) + ADP + phosphate + H(+). Its function is as follows. Part of the ABC transporter complex CcmAB involved in the biogenesis of c-type cytochromes; once thought to export heme, this seems not to be the case, but its exact role is uncertain. Responsible for energy coupling to the transport system. This chain is Cytochrome c biogenesis ATP-binding export protein CcmA, found in Legionella pneumophila.